The sequence spans 227 residues: Flagellar L-ring protein 2 (227 aa).

An N-terminal signal peptide occupies residues 1–17; it reads MKSKLAITMVSALLLAA. Residue Cys18 is the site of N-palmitoyl cysteine attachment. A lipid anchor (S-diacylglycerol cysteine) is attached at Cys18.

This sequence belongs to the FlgH family. The basal body constitutes a major portion of the flagellar organelle and consists of four rings (L,P,S, and M) mounted on a central rod.

It is found in the cell outer membrane. It localises to the bacterial flagellum basal body. Its function is as follows. Assembles around the rod to form the L-ring and probably protects the motor/basal body from shearing forces during rotation. The sequence is that of Flagellar L-ring protein 2 from Chromobacterium violaceum (strain ATCC 12472 / DSM 30191 / JCM 1249 / CCUG 213 / NBRC 12614 / NCIMB 9131 / NCTC 9757 / MK).